The chain runs to 241 residues: MQKVALVTGAGQGIGKAIALRLVKDGFAVAIADYNDATATAVAAEINQAGGRAVAIKVDVSRRDQVFAAVEQARKALGGFNVIVNNAGIAPSTPIESITEEIVDRVYNINVKGVIWGMQAAVEAFKKEGHGGKIVNACSQAGHVGNPELAVYSSSKFAVRGLTQTAARDLAPLGITVNGFCPGIVKTPMWAEIDRQCRKRRANRWATARLNLPNASPLAACRSLKTSPPACRSSPARIPTI.

Residue 6–30 (LVTGAGQGIGKAIALRLVKDGFAVA) participates in NAD(+) binding. Serine 139 provides a ligand contact to substrate. The Proton acceptor role is filled by tyrosine 152. Lysine 156 is an active-site residue.

This sequence belongs to the short-chain dehydrogenases/reductases (SDR) family. As to quaternary structure, homotetramer.

It carries out the reaction (S)-acetoin + NAD(+) = diacetyl + NADH + H(+). Its function is as follows. Catalyzes the irreversible reduction of 2,3-butanediol to (S)-acetoin in the presence of NADH. This is Diacetyl reductase [(S)-acetoin forming] (budC) from Raoultella terrigena (Klebsiella terrigena).